We begin with the raw amino-acid sequence, 556 residues long: Urocanate hydratase (556 aa).

Residues 52-53 (GG), Gln130, 176-178 (GMG), Glu196, Arg201, 242-243 (NA), 263-267 (QTSAH), 273-274 (YL), and Tyr322 each bind NAD(+). Cys410 is a catalytic residue. Gly492 serves as a coordination point for NAD(+).

The protein belongs to the urocanase family. The cofactor is NAD(+).

It is found in the cytoplasm. It catalyses the reaction 4-imidazolone-5-propanoate = trans-urocanate + H2O. It participates in amino-acid degradation; L-histidine degradation into L-glutamate; N-formimidoyl-L-glutamate from L-histidine: step 2/3. Catalyzes the conversion of urocanate to 4-imidazolone-5-propionate. This is Urocanate hydratase from Bradyrhizobium diazoefficiens (strain JCM 10833 / BCRC 13528 / IAM 13628 / NBRC 14792 / USDA 110).